We begin with the raw amino-acid sequence, 680 residues long: Zinc finger protein OBI1 (680 aa).

The 72-residue stretch at 16-87 folds into the KRAB domain; it reads VSFEDVAVDF…AEATEQCLPG (72 aa). The segment at 263–280 adopts a C2H2-type 1; degenerate zinc-finger fold; that stretch reads CHKIFPNKTELSNHDAMH. 8 consecutive C2H2-type zinc fingers follow at residues 455 to 477, 483 to 505, 511 to 533, 539 to 561, 567 to 589, 595 to 617, 623 to 645, and 651 to 673; these read FRCN…QRMH, HECK…QGIH, YECN…ERTH, FECK…QKIH, HKCK…QKTH, YECK…ETTH, and YECK…QVIH.

In terms of processing, polyubiquitinated, leading to its degradation via the ubiquitin-proteasome pathway. Expressed during osteogenic differentiation where levels increase from the first days of differentiation and remain high during the whole process. Highly expressed in lung.

Its subcellular location is the nucleus. Functionally, may modulate osteogenic differentiation, at least in part, through the bone morphogenetic protein (BMP) signaling pathway, increasing RUNX2 activation and leading to osteoblast commitment and maturation. The polypeptide is Zinc finger protein OBI1 (ObI1) (Mus musculus (Mouse)).